Reading from the N-terminus, the 907-residue chain is MISGLLKKIFGSRNDRLIRQYSQTVRAINALEPEISALSDEALQAKTADFKQRVANGESLDSILPEAFAVVREAGKRVHGMRHFDVQLIGGMVLHNGKISEMRTGEGKTLVATLPAYLNALTGKGVHVITVNDYLASRDADWMGRIYGFLGLTTGCNLSRMGHEAKQAAYASDITYGTNNEFGFDYLRDNMVYSTGERVQRGLSFAIVDEVDSILIDEARTPLIISGQAEDHTDLYLKLNQVAPMLAEQEGEGDNVIKPGDYTLDLKARQVLLTEQGHENAEQILTRMGLLAEGTSLYDPGNILLVHHLYAALRAHSLYHKDQHYVVQNNEVVIVDEFTGRLMAGRRWSDGLHQAVEAKESVRIQAENQTLASITFQNYFRMYGKLAGMTGTADTEAFEFHSIYGLETVVVPTNRAMVRKDENDKVYRTAKEKWDAVIADIRGCVERGQPVLVGTTSIEINEFLSGELNRVDLSHQVLNAKQHEHEAEIVAQAGRPGVITIATNMAGRGTDIVLGGSIERQLAAVRDDETLTPEQKEARTAALREEWKPVHEQVLANGGLHIIGTERHESRRIDNQLRGRAGRQGDPGSSRFYLSLEDPLMKIFAGERLNAIMVRLKMPEGEAIEHAMVTRSLESAQRKVEQRNFDIRKQLLEYDDVANDQRKVIYQQRNELLEADDISETIRAMRQGVLHDSFRVHVPVDSVEEQWDIAALEQALASEFQLRLPIGEWLKAEPNLDDETILKRLLAAAEEQYAVKTAQVDPVAWHQFERNVMLQSLDTHWREHLAALDHLRQGIHLRGYAQKNPKQEYKREAFELFETLLDTVRNDVSKLLMTVQVRTEAQLEEAEVPPELENVQYQHAAFDEALGVATAPEAAQAAAPAGPKIGRNDPCPCGSGKKYKHCHGKLS.

ATP-binding positions include glutamine 87, 105–109 (GEGKT), and aspartate 511. Positions 891, 893, 902, and 903 each coordinate Zn(2+).

Belongs to the SecA family. Monomer and homodimer. Part of the essential Sec protein translocation apparatus which comprises SecA, SecYEG and auxiliary proteins SecDF-YajC and YidC. It depends on Zn(2+) as a cofactor.

It is found in the cell inner membrane. The protein resides in the cytoplasm. The enzyme catalyses ATP + H2O + cellular proteinSide 1 = ADP + phosphate + cellular proteinSide 2.. Its function is as follows. Part of the Sec protein translocase complex. Interacts with the SecYEG preprotein conducting channel. Has a central role in coupling the hydrolysis of ATP to the transfer of proteins into and across the cell membrane, serving both as a receptor for the preprotein-SecB complex and as an ATP-driven molecular motor driving the stepwise translocation of polypeptide chains across the membrane. This is Protein translocase subunit SecA from Aromatoleum aromaticum (strain DSM 19018 / LMG 30748 / EbN1) (Azoarcus sp. (strain EbN1)).